Consider the following 65-residue polypeptide: Small ribosomal subunit protein bS21 (65 aa).

The protein belongs to the bacterial ribosomal protein bS21 family.

The chain is Small ribosomal subunit protein bS21 from Flavobacterium psychrophilum (strain ATCC 49511 / DSM 21280 / CIP 103535 / JIP02/86).